Here is a 114-residue protein sequence, read N- to C-terminus: Putative protein TfaS (114 aa).

It belongs to the tfa family.

This Escherichia coli (strain K12) protein is Putative protein TfaS (tfaS).